Here is a 393-residue protein sequence, read N- to C-terminus: Enoyl-[acyl-carrier-protein] reductase [NADH] (393 aa).

NAD(+)-binding positions include 48–53, 74–75, 111–112, and 139–140; these read GSSTGY, FE, DA, and LA. A substrate-binding site is contributed by Y225. Residue Y235 is the Proton donor of the active site. NAD(+) contacts are provided by residues K244 and 273-275; that span reads LVT.

Belongs to the TER reductase family. As to quaternary structure, monomer.

The catalysed reaction is a 2,3-saturated acyl-[ACP] + NAD(+) = a (2E)-enoyl-[ACP] + NADH + H(+). Its pathway is lipid metabolism; fatty acid biosynthesis. Its function is as follows. Involved in the final reduction of the elongation cycle of fatty acid synthesis (FAS II). Catalyzes the reduction of a carbon-carbon double bond in an enoyl moiety that is covalently linked to an acyl carrier protein (ACP). The polypeptide is Enoyl-[acyl-carrier-protein] reductase [NADH] (Pseudoalteromonas atlantica (strain T6c / ATCC BAA-1087)).